The sequence spans 176 residues: Peptidyl-prolyl cis-trans isomerase cyp6 (176 aa).

One can recognise a PPIase cyclophilin-type domain in the interval 10-173; it reads FFDIAVNGQH…AKIEITDCGE (164 aa).

It belongs to the cyclophilin-type PPIase family.

The catalysed reaction is [protein]-peptidylproline (omega=180) = [protein]-peptidylproline (omega=0). Its function is as follows. PPIases accelerate the folding of proteins. It catalyzes the cis-trans isomerization of proline imidic peptide bonds in oligopeptides. The polypeptide is Peptidyl-prolyl cis-trans isomerase cyp6 (cyp6) (Rhizopus delemar (strain RA 99-880 / ATCC MYA-4621 / FGSC 9543 / NRRL 43880) (Mucormycosis agent)).